Reading from the N-terminus, the 459-residue chain is NADP-specific glutamate dehydrogenase (459 aa).

K114 is an active-site residue.

The protein belongs to the Glu/Leu/Phe/Val dehydrogenases family. In terms of assembly, homohexamer.

The catalysed reaction is L-glutamate + NADP(+) + H2O = 2-oxoglutarate + NH4(+) + NADPH + H(+). This Emericella nidulans (strain FGSC A4 / ATCC 38163 / CBS 112.46 / NRRL 194 / M139) (Aspergillus nidulans) protein is NADP-specific glutamate dehydrogenase (gdhA).